Reading from the N-terminus, the 89-residue chain is Small ribosomal subunit protein uS19 (89 aa).

Belongs to the universal ribosomal protein uS19 family.

Protein S19 forms a complex with S13 that binds strongly to the 16S ribosomal RNA. This is Small ribosomal subunit protein uS19 from Vesicomyosocius okutanii subsp. Calyptogena okutanii (strain HA).